The primary structure comprises 147 residues: Austinoid biosynthesis cluster protein H (147 aa).

It belongs to the trt14 isomerase family. In terms of assembly, homodimer.

It participates in secondary metabolite biosynthesis; terpenoid biosynthesis. In terms of biological role, part of the gene cluster that mediates the biosynthesis of calidodehydroaustin, a fungal meroterpenoid. The first step of the pathway is the synthesis of 3,5-dimethylorsellinic acid by the polyketide synthase ausA. 3,5-dimethylorsellinic acid is then prenylated by the polyprenyl transferase ausN. Further epoxidation by the FAD-dependent monooxygenase ausM and cyclization by the probable terpene cyclase ausL lead to the formation of protoaustinoid A. Protoaustinoid A is then oxidized to spiro-lactone preaustinoid A3 by the combined action of the FAD-binding monooxygenases ausB and ausC, and the dioxygenase ausE. Acid-catalyzed keto-rearrangement and ring contraction of the tetraketide portion of preaustinoid A3 by ausJ lead to the formation of preaustinoid A4. The aldo-keto reductase ausK, with the help of ausH, is involved in the next step by transforming preaustinoid A4 into isoaustinone which is in turn hydroxylated by the P450 monooxygenase ausI to form austinolide. The cytochrome P450 monooxygenase ausG modifies austinolide to austinol. Austinol is further acetylated to austin by the O-acetyltransferase ausP, which spontaneously changes to dehydroaustin. The cytochrome P450 monooxygenase ausR then converts dehydroaustin is into 7-dehydrodehydroaustin. The hydroxylation catalyzed by ausR permits the O-acetyltransferase ausQ to add an additional acetyl group to the molecule, leading to the formation of acetoxydehydroaustin. The short chain dehydrogenase ausT catalyzes the reduction of the double bond present between carbon atoms 1 and 2 to convert 7-dehydrodehydroaustin into 1,2-dihydro-7-hydroxydehydroaustin. AusQ catalyzes not only an acetylation reaction but also the addition of the PKS ausV diketide product to 1,2-dihydro-7-hydroxydehydroaustin, forming precalidodehydroaustin. Finally, the iron/alpha-ketoglutarate-dependent dioxygenase converts precalidodehydroaustin into calidodehydroaustin. The sequence is that of Austinoid biosynthesis cluster protein H from Aspergillus calidoustus.